The following is a 176-amino-acid chain: NAD(P)H-quinone oxidoreductase subunit 6, chloroplastic (176 aa).

A run of 5 helical transmembrane segments spans residues phenylalanine 10 to proline 30, proline 32 to leucine 52, alanine 61 to isoleucine 81, leucine 92 to isoleucine 112, and phenylalanine 152 to alanine 172.

This sequence belongs to the complex I subunit 6 family. NDH is composed of at least 16 different subunits, 5 of which are encoded in the nucleus.

It is found in the plastid. Its subcellular location is the chloroplast thylakoid membrane. It catalyses the reaction a plastoquinone + NADH + (n+1) H(+)(in) = a plastoquinol + NAD(+) + n H(+)(out). It carries out the reaction a plastoquinone + NADPH + (n+1) H(+)(in) = a plastoquinol + NADP(+) + n H(+)(out). Its function is as follows. NDH shuttles electrons from NAD(P)H:plastoquinone, via FMN and iron-sulfur (Fe-S) centers, to quinones in the photosynthetic chain and possibly in a chloroplast respiratory chain. The immediate electron acceptor for the enzyme in this species is believed to be plastoquinone. Couples the redox reaction to proton translocation, and thus conserves the redox energy in a proton gradient. The sequence is that of NAD(P)H-quinone oxidoreductase subunit 6, chloroplastic (ndhG) from Lactuca sativa (Garden lettuce).